The chain runs to 353 residues: Diacetylchitobiose uptake system permease protein NgcF (353 aa).

The disordered stretch occupies residues 1–24 (MKDTIPTAETASRRPEPAARGGRP). A run of 6 helical transmembrane segments spans residues 36–56 (FFLA…LIPF), 100–120 (LLAA…AVAI), 141–161 (IISF…WAQM), 197–217 (VMFV…IAAI), 254–274 (AYIY…AMVP), and 303–323 (TAMG…VFLV). The 226-residue stretch at 95-320 (LRNVALLAAF…AVTLVFAALV (226 aa)) folds into the ABC transmembrane type-1 domain. The interval 329–353 (GGEGESKRKAPGSRARRAAAKGGAR) is disordered. Residues 337–353 (KAPGSRARRAAAKGGAR) show a composition bias toward basic residues.

It belongs to the binding-protein-dependent transport system permease family. In terms of assembly, the complex is composed of two ATP-binding proteins (MsiK), two transmembrane proteins (NgcF and NgcG) and a solute-binding protein (NgcE).

It localises to the cell membrane. Functionally, part of the ABC transporter complex NgcEFG-MsiK involved in N,N'-diacetylchitobiose ((GlcNAc)2) uptake. Responsible for the translocation of the substrate across the membrane. This chain is Diacetylchitobiose uptake system permease protein NgcF, found in Streptomyces coelicolor (strain ATCC BAA-471 / A3(2) / M145).